Here is a 219-residue protein sequence, read N- to C-terminus: MAQKINPLGFRLGTTQSHHSIWFAQPKDYSDGLQEDQKIRDCIQNYIQKNMQISSDSGVEGIARIEIRKRIDLIQVKIYMGFPKLLIEDGTRRIEELQRIVQKEINSVNRKINITITKITKPYGDPNILAEFIAGQLNNRVSFRKAIQKAIELAEQADTKGIRVQIGGRINGGEIARVLWMKEGRVPLQTIRAKIDYCVYTVRTIHGLLGIKIWIFRED.

Positions 43-120 constitute a KH type-2 domain; it reads IQNYIQKNMQ…KINITITKIT (78 aa).

This sequence belongs to the universal ribosomal protein uS3 family. As to quaternary structure, part of the 30S ribosomal subunit.

The protein localises to the plastid. It localises to the chloroplast. The sequence is that of Small ribosomal subunit protein uS3c (rps3) from Oenothera elata subsp. hookeri (Hooker's evening primrose).